Consider the following 373-residue polypeptide: MNTFGDNFRVTTWGESHGKALGAVIDGCPANLPISEQDIQNELNRRRPGYSIFSTPRKEEDKVEILSGIFEGKTTGTPISGLVFNKGQKSKDYSKIKDTPRPGHADLNYFLKYGNYDYRGGGRSSGRTTIGNVIGGAVAKKLIEFTHNIKIIGYSTKIGKIKGDFDYYKNPKFFESDSNIEKLLKKIENNPLRCPSKNSDEMKDYVIDAMDKKDSVGGIIEIIIKGIPQGVGNPVFNKLEGKLGSAFIGINAVKGFEIGRGFEASELYGSEMNDAYHIYENSIKEMTNNAGGIIGGISTGSPVVLRVSIKPTPSISKIQDSMNLISNKDEKIEIGGRHDPIIVPRVIPVLESMAAITVADLMISSGYINPCRI.

Position 46 (R46) interacts with NADP(+). Residues 123-125, 251-252, G295, 310-314, and R337 each bind FMN; these read RSS, NA, and KPTPS.

It belongs to the chorismate synthase family. It depends on FMNH2 as a cofactor.

It catalyses the reaction 5-O-(1-carboxyvinyl)-3-phosphoshikimate = chorismate + phosphate. It functions in the pathway metabolic intermediate biosynthesis; chorismate biosynthesis; chorismate from D-erythrose 4-phosphate and phosphoenolpyruvate: step 7/7. Its function is as follows. Catalyzes the anti-1,4-elimination of the C-3 phosphate and the C-6 proR hydrogen from 5-enolpyruvylshikimate-3-phosphate (EPSP) to yield chorismate, which is the branch point compound that serves as the starting substrate for the three terminal pathways of aromatic amino acid biosynthesis. This reaction introduces a second double bond into the aromatic ring system. The sequence is that of Chorismate synthase from Methanococcus maripaludis (strain C7 / ATCC BAA-1331).